Consider the following 588-residue polypeptide: Putative calcium-binding mitochondrial carrier F55A11.4 (588 aa).

Over residues 1–14 (MINKNEQTESTSGA) the composition is skewed to polar residues. The disordered stretch occupies residues 1–25 (MINKNEQTESTSGAAEQKEDDEEQY). EF-hand domains lie at 73–108 (EKERQIRDIYDRLDIDNDGTIDIRDLTLALKHETPH), 109–139 (IPANLAPVIMSKMSPDDEGRVDFYSFSSYVL), 140–175 (ENEQKLAEMFADMDRNHDGLVDVVEMKNYCKDIGVP), and 176–211 (LDDHKAQHIVNKMDQTGSASVDLKEFQEFMMLYPSS). Positions 86, 88, 90, 92, and 97 each coordinate Ca(2+). Ca(2+) is bound by residues D153, N155, D157, and E164. Solcar repeat units follow at residues 246-332 (GIWW…LKRL), 342-428 (ISTF…LKRT), and 440-529 (PGVL…VRTG). 6 consecutive transmembrane segments (helical) span residues 252–269 (LVAGGAAGAVSRTCTAPF), 307–326 (GNGINVIKIAPESAIKFMCY), 352–365 (SAAGAISQSTIYPM), 403–422 (GYLPNLIGIIPYAGIDLAIY), 446–463 (LACGTCSSTCGQLSSYPF), and 504–523 (GITPNFLKVIPAVSISYVVY).

This sequence belongs to the mitochondrial carrier (TC 2.A.29) family. As to quaternary structure, homodimer (via N-terminus).

The protein resides in the mitochondrion inner membrane. In terms of biological role, mitochondrial and calcium-binding carrier that catalyzes the calcium-dependent exchange of cytoplasmic glutamate with mitochondrial aspartate across the mitochondrial inner membrane. This is Putative calcium-binding mitochondrial carrier F55A11.4 from Caenorhabditis elegans.